The primary structure comprises 443 residues: UDP-N-acetylmuramate--L-alanine ligase (443 aa).

110-116 (GAHGKTS) contributes to the ATP binding site.

This sequence belongs to the MurCDEF family.

It localises to the cytoplasm. The enzyme catalyses UDP-N-acetyl-alpha-D-muramate + L-alanine + ATP = UDP-N-acetyl-alpha-D-muramoyl-L-alanine + ADP + phosphate + H(+). The protein operates within cell wall biogenesis; peptidoglycan biosynthesis. In terms of biological role, cell wall formation. This Streptococcus equi subsp. zooepidemicus (strain MGCS10565) protein is UDP-N-acetylmuramate--L-alanine ligase.